A 123-amino-acid chain; its full sequence is Small ribosomal subunit protein uS11 (123 aa).

Residues 1 to 22 (MAKKRKKKLSSPEGISHIHASA) form a disordered region.

It belongs to the universal ribosomal protein uS11 family. As to quaternary structure, part of the 30S ribosomal subunit. Interacts with proteins S7 and S18. Binds to IF-3.

In terms of biological role, located on the platform of the 30S subunit, it bridges several disparate RNA helices of the 16S rRNA. Forms part of the Shine-Dalgarno cleft in the 70S ribosome. The polypeptide is Small ribosomal subunit protein uS11 (Malacoplasma penetrans (strain HF-2) (Mycoplasma penetrans)).